Consider the following 592-residue polypeptide: Aspartate--tRNA(Asp/Asn) ligase (592 aa).

Glu176 contacts L-aspartate. Residues 200 to 203 (QIFK) are aspartate. An L-aspartate-binding site is contributed by Arg222. ATP contacts are provided by residues 222-224 (RDE) and Gln231. His450 is a binding site for L-aspartate. Glu484 serves as a coordination point for ATP. An L-aspartate-binding site is contributed by Arg491. 536–539 (GLDR) is an ATP binding site.

Belongs to the class-II aminoacyl-tRNA synthetase family. Type 1 subfamily. In terms of assembly, homodimer.

It localises to the cytoplasm. It catalyses the reaction tRNA(Asx) + L-aspartate + ATP = L-aspartyl-tRNA(Asx) + AMP + diphosphate. Its function is as follows. Aspartyl-tRNA synthetase with relaxed tRNA specificity since it is able to aspartylate not only its cognate tRNA(Asp) but also tRNA(Asn). Reaction proceeds in two steps: L-aspartate is first activated by ATP to form Asp-AMP and then transferred to the acceptor end of tRNA(Asp/Asn). The polypeptide is Aspartate--tRNA(Asp/Asn) ligase (Anoxybacillus flavithermus (strain DSM 21510 / WK1)).